The chain runs to 191 residues: MSSDRHTPTKDPPDHPSSSSNHHKQPLPPQPQQPLSRYESQKRRDWNTFVQYLKSQNPPLMMSQFDYTHVLSFLRYLDQFGKTKVHHQACVFFGQPDPPGPCTCPLKQAWGSLDALIGRLRAAYEEHGGGSPDTNPFANGSIRVHLREVRESQAKARGIPYRKKKRRKTKNEVVVVKKDVANSSTPNQSFT.

Positions 1–14 are enriched in basic and acidic residues; the sequence is MSSDRHTPTKDPPD. Disordered stretches follow at residues 1-41 and 153-191; these read MSSD…YESQ and QAKARGIPYRKKKRRKTKNEVVVVKKDVANSSTPNQSFT. The ALOG domain occupies 37–165; it reads RYESQKRRDW…ARGIPYRKKK (129 aa). Residues 160–169 are compositionally biased toward basic residues; it reads PYRKKKRRKT. A Nuclear localization signal motif is present at residues 163–167; it reads KKKRR. Positions 181–191 are enriched in polar residues; sequence ANSSTPNQSFT.

Belongs to the plant homeotic and developmental regulators ALOG protein family.

Its subcellular location is the nucleus. Probable transcription regulator that acts as a developmental regulator by promoting cell growth in response to light. The polypeptide is Protein LIGHT-DEPENDENT SHORT HYPOCOTYLS 9 (LSH9) (Arabidopsis thaliana (Mouse-ear cress)).